Reading from the N-terminus, the 348-residue chain is Holliday junction branch migration complex subunit RuvB (348 aa).

Residues 4–184 (ADRLIAASGR…FGIVQRLEFY (181 aa)) form a large ATPase domain (RuvB-L) region. Residues Ile-23, Arg-24, Gly-65, Lys-68, Thr-69, Thr-70, 131–133 (EDF), Arg-174, Tyr-184, and Arg-221 each bind ATP. Thr-69 lines the Mg(2+) pocket. A small ATPAse domain (RuvB-S) region spans residues 185 to 255 (SDKDLATIVS…VADMALNLLD (71 aa)). The head domain (RuvB-H) stretch occupies residues 258 to 348 (ERGFDHSDRR…GGDFSEPGDE (91 aa)). DNA is bound by residues Arg-294, Arg-313, and Arg-318.

Belongs to the RuvB family. Homohexamer. Forms an RuvA(8)-RuvB(12)-Holliday junction (HJ) complex. HJ DNA is sandwiched between 2 RuvA tetramers; dsDNA enters through RuvA and exits via RuvB. An RuvB hexamer assembles on each DNA strand where it exits the tetramer. Each RuvB hexamer is contacted by two RuvA subunits (via domain III) on 2 adjacent RuvB subunits; this complex drives branch migration. In the full resolvosome a probable DNA-RuvA(4)-RuvB(12)-RuvC(2) complex forms which resolves the HJ.

The protein resides in the cytoplasm. The enzyme catalyses ATP + H2O = ADP + phosphate + H(+). In terms of biological role, the RuvA-RuvB-RuvC complex processes Holliday junction (HJ) DNA during genetic recombination and DNA repair, while the RuvA-RuvB complex plays an important role in the rescue of blocked DNA replication forks via replication fork reversal (RFR). RuvA specifically binds to HJ cruciform DNA, conferring on it an open structure. The RuvB hexamer acts as an ATP-dependent pump, pulling dsDNA into and through the RuvAB complex. RuvB forms 2 homohexamers on either side of HJ DNA bound by 1 or 2 RuvA tetramers; 4 subunits per hexamer contact DNA at a time. Coordinated motions by a converter formed by DNA-disengaged RuvB subunits stimulates ATP hydrolysis and nucleotide exchange. Immobilization of the converter enables RuvB to convert the ATP-contained energy into a lever motion, pulling 2 nucleotides of DNA out of the RuvA tetramer per ATP hydrolyzed, thus driving DNA branch migration. The RuvB motors rotate together with the DNA substrate, which together with the progressing nucleotide cycle form the mechanistic basis for DNA recombination by continuous HJ branch migration. Branch migration allows RuvC to scan DNA until it finds its consensus sequence, where it cleaves and resolves cruciform DNA. In Pseudomonas putida (strain GB-1), this protein is Holliday junction branch migration complex subunit RuvB.